The sequence spans 581 residues: Frizzled-10 (581 aa).

An N-terminal signal peptide occupies residues 1 to 20 (MQRPGPRLWLVLQVMGSCAA). Topologically, residues 21 to 225 (ISSMDMERPG…DVYWSREDKR (205 aa)) are extracellular. The region spanning 29–150 (PGDGKCQPIE…NDPNYLCMEA (122 aa)) is the FZ domain. Cystine bridges form between cysteine 34-cysteine 95, cysteine 42-cysteine 88, cysteine 79-cysteine 117, cysteine 106-cysteine 147, and cysteine 110-cysteine 134. Asparagine 48 carries N-linked (GlcNAc...) asparagine glycosylation. Asparagine 153 carries N-linked (GlcNAc...) asparagine glycosylation. The chain crosses the membrane as a helical span at residues 226–246 (FAVVWLAIWAVLCFFSSAFTV). At 247-262 (LTFLIDPARFRYPERP) the chain is on the cytoplasmic side. Residues 263–283 (IIFLSMCYCVYSVGYLIRLFA) traverse the membrane as a helical segment. Topologically, residues 284–311 (GAESIACDRDSGQLYVIQEGLESTGCTL) are extracellular. A helical transmembrane segment spans residues 312-332 (VFLVLYYFGMASSLWWVVLTL). Residues 333-351 (TWFLAAGKKWGHEAIEANS) lie on the Cytoplasmic side of the membrane. The chain crosses the membrane as a helical span at residues 352–372 (SYFHLAAWAIPAVKTILILVM). The Extracellular segment spans residues 373–393 (RRVAGDELTGVCYVGSMDVNA). A helical transmembrane segment spans residues 394–414 (LTGFVLIPLACYLVIGTSFIL). The Cytoplasmic portion of the chain corresponds to 415-443 (SGFVALFHIRRVMKTGGENTDKLEKLMVR). A helical transmembrane segment spans residues 444 to 464 (IGLFSVLYTVPATCVIACYFY). Over 465-502 (ERLNMDYWKILAAQHKCKMNNQTKTLDCLMAASIPAVE) the chain is Extracellular. A glycan (N-linked (GlcNAc...) asparagine) is linked at asparagine 485. A helical membrane pass occupies residues 503-523 (IFMVKIFMLLVVGITSGMWIW). The Cytoplasmic segment spans residues 524–581 (TSKTLQSWQQVCSRRLKKKSRRKPASVITSGGIYKKAQHPQKTHHGKYEIPAQSPTCV). Residues 526–531 (KTLQSW) carry the Lys-Thr-X-X-X-Trp motif, mediates interaction with the PDZ domain of Dvl family members motif. A disordered region spans residues 560 to 581 (AQHPQKTHHGKYEIPAQSPTCV). The short motif at 579–581 (TCV) is the PDZ-binding element.

The protein belongs to the G-protein coupled receptor Fz/Smo family. As to quaternary structure, interacts with WNT7B. Interacts with MYOC. Post-translationally, ubiquitinated by ZNRF3, leading to its degradation by the proteasome. As to expression, highest levels in the placenta and fetal kidney, followed by fetal lung and brain. In adult brain, abundantly expressed in the cerebellum, followed by cerebral cortex, medulla and spinal cord; very low levels in total brain, frontal lobe, temporal lobe and putamen. Weak expression detected in adult brain, heart, lung, skeletal muscle, pancreas, spleen and prostate.

It is found in the cell membrane. Receptor for Wnt proteins. Functions in the canonical Wnt/beta-catenin signaling pathway. The canonical Wnt/beta-catenin signaling pathway leads to the activation of disheveled proteins, inhibition of GSK-3 kinase, nuclear accumulation of beta-catenin and activation of Wnt target genes. A second signaling pathway involving PKC and calcium fluxes has been seen for some family members, but it is not yet clear if it represents a distinct pathway or if it can be integrated in the canonical pathway, as PKC seems to be required for Wnt-mediated inactivation of GSK-3 kinase. Both pathways seem to involve interactions with G-proteins. May be involved in transduction and intercellular transmission of polarity information during tissue morphogenesis and/or in differentiated tissues. The protein is Frizzled-10 (FZD10) of Homo sapiens (Human).